The chain runs to 321 residues: GDP-L-fucose synthase (321 aa).

14-20 contributes to the NADP(+) binding site; the sequence is GGSGLVG. Residue tyrosine 143 is the Proton donor/acceptor of the active site. Residues lysine 147, 170 to 173, and histidine 186 each bind NADP(+); that span reads PTNV. Positions 194, 208, 215, and 277 each coordinate substrate.

The protein belongs to the NAD(P)-dependent epimerase/dehydratase family. Fucose synthase subfamily. In terms of assembly, homodimer.

It catalyses the reaction GDP-beta-L-fucose + NADP(+) = GDP-4-dehydro-alpha-D-rhamnose + NADPH + H(+). Its pathway is nucleotide-sugar biosynthesis; GDP-L-fucose biosynthesis via de novo pathway; GDP-L-fucose from GDP-alpha-D-mannose: step 2/2. Catalyzes the two-step NADP-dependent conversion of GDP-4-dehydro-6-deoxy-D-mannose to GDP-fucose, involving an epimerase and a reductase reaction. The polypeptide is GDP-L-fucose synthase (Mus musculus (Mouse)).